A 505-amino-acid polypeptide reads, in one-letter code: Maturase K (505 aa).

Belongs to the intron maturase 2 family. MatK subfamily.

It is found in the plastid. Its subcellular location is the chloroplast. Its function is as follows. Usually encoded in the trnK tRNA gene intron. Probably assists in splicing its own and other chloroplast group II introns. The polypeptide is Maturase K (Froelichia floridana (Florida snake-cotton)).